The sequence spans 328 residues: UPF0194 membrane protein YE2891 (328 aa).

A signal peptide spans 1 to 22; that stretch reads MNRKKIIVAVVIVALLAAIGYG. 2 coiled-coil regions span residues 80-109 and 139-208; these read YVNA…REEE and ANKA…TTLL.

The protein belongs to the UPF0194 family.

The protein resides in the periplasm. The sequence is that of UPF0194 membrane protein YE2891 from Yersinia enterocolitica serotype O:8 / biotype 1B (strain NCTC 13174 / 8081).